The sequence spans 288 residues: Eukaryotic translation initiation factor 3 subunit F-2 (288 aa).

The MPN domain occupies Val12–Gly149.

Belongs to the eIF-3 subunit F family. Component of the eukaryotic translation initiation factor 3 (eIF-3) complex. The eIF-3 complex interacts with pix.

Its subcellular location is the cytoplasm. Component of the eukaryotic translation initiation factor 3 (eIF-3) complex, which is involved in protein synthesis of a specialized repertoire of mRNAs and, together with other initiation factors, stimulates binding of mRNA and methionyl-tRNAi to the 40S ribosome. The eIF-3 complex specifically targets and initiates translation of a subset of mRNAs involved in cell proliferation. The chain is Eukaryotic translation initiation factor 3 subunit F-2 from Drosophila pseudoobscura pseudoobscura (Fruit fly).